Consider the following 382-residue polypeptide: Alkanesulfonate monooxygenase (382 aa).

The protein belongs to the SsuD family.

The enzyme catalyses an alkanesulfonate + FMNH2 + O2 = an aldehyde + FMN + sulfite + H2O + 2 H(+). Functionally, catalyzes the desulfonation of aliphatic sulfonates. This Pseudomonas entomophila (strain L48) protein is Alkanesulfonate monooxygenase.